Here is a 222-residue protein sequence, read N- to C-terminus: Deoxyribose-phosphate aldolase (222 aa).

Asp89 functions as the Proton donor/acceptor in the catalytic mechanism. Lys152 (schiff-base intermediate with acetaldehyde) is an active-site residue. Catalysis depends on Lys181, which acts as the Proton donor/acceptor.

This sequence belongs to the DeoC/FbaB aldolase family. DeoC type 1 subfamily.

The protein localises to the cytoplasm. It catalyses the reaction 2-deoxy-D-ribose 5-phosphate = D-glyceraldehyde 3-phosphate + acetaldehyde. The protein operates within carbohydrate degradation; 2-deoxy-D-ribose 1-phosphate degradation; D-glyceraldehyde 3-phosphate and acetaldehyde from 2-deoxy-alpha-D-ribose 1-phosphate: step 2/2. Functionally, catalyzes a reversible aldol reaction between acetaldehyde and D-glyceraldehyde 3-phosphate to generate 2-deoxy-D-ribose 5-phosphate. The protein is Deoxyribose-phosphate aldolase of Clostridium novyi (strain NT).